The primary structure comprises 328 residues: Cytochrome c biogenesis protein CcsA (328 aa).

Transmembrane regions (helical) follow at residues 15-35 (FLVL…PSIP), 36-56 (LLPG…AALL), 68-88 (ISNL…VHLI), 97-117 (LVGV…TLSL), 142-162 (VMML…AFLI), 236-256 (VIGL…VWAN), 263-283 (WSWD…AAYL), and 297-317 (AILA…VNLL).

It belongs to the CcmF/CycK/Ccl1/NrfE/CcsA family. May interact with ccs1.

The protein localises to the cellular thylakoid membrane. Functionally, required during biogenesis of c-type cytochromes (cytochrome c6 and cytochrome f) at the step of heme attachment. The polypeptide is Cytochrome c biogenesis protein CcsA (Microcystis aeruginosa (strain NIES-843 / IAM M-2473)).